Consider the following 266-residue polypeptide: Glucosamine-6-phosphate deaminase (266 aa).

D72 functions as the Proton acceptor; for enolization step in the catalytic mechanism. D141 functions as the For ring-opening step in the catalytic mechanism. Residue H143 is the Proton acceptor; for ring-opening step of the active site. The For ring-opening step role is filled by E148.

Belongs to the glucosamine/galactosamine-6-phosphate isomerase family. NagB subfamily. In terms of assembly, homohexamer.

The enzyme catalyses alpha-D-glucosamine 6-phosphate + H2O = beta-D-fructose 6-phosphate + NH4(+). It functions in the pathway amino-sugar metabolism; N-acetylneuraminate degradation; D-fructose 6-phosphate from N-acetylneuraminate: step 5/5. With respect to regulation, allosterically activated by N-acetylglucosamine 6-phosphate (GlcNAc6P). In terms of biological role, catalyzes the reversible isomerization-deamination of glucosamine 6-phosphate (GlcN6P) to form fructose 6-phosphate (Fru6P) and ammonium ion. In Citrobacter koseri (strain ATCC BAA-895 / CDC 4225-83 / SGSC4696), this protein is Glucosamine-6-phosphate deaminase.